The primary structure comprises 257 residues: MEQRLEIEQFICRSDNYGVLIHDPESALTATIDAPDAYAIEAALERRGWTLDFIFTTHHHLDHVEGNEPLKEKFGVSIIGPEAEKAKIPGIDRTVKGGDEFTFGLFKVKVISTPGHTAGGISYYLPDAKVVFTGDTLFALGCGRLFEGTPATMFHSLEKLVALPGDTALYCGHEYTQNNARFALTIDPDNSALKERAKEIARLRAHERMTLPSTIALEMATNPFLRWHDRTIRARLGLQDAPDEAVFAEIRKRKDMF.

The Zn(2+) site is built by histidine 58, histidine 60, aspartate 62, histidine 63, histidine 116, aspartate 135, and histidine 173.

The protein belongs to the metallo-beta-lactamase superfamily. Glyoxalase II family. As to quaternary structure, monomer. It depends on Zn(2+) as a cofactor.

The catalysed reaction is an S-(2-hydroxyacyl)glutathione + H2O = a 2-hydroxy carboxylate + glutathione + H(+). It functions in the pathway secondary metabolite metabolism; methylglyoxal degradation; (R)-lactate from methylglyoxal: step 2/2. In terms of biological role, thiolesterase that catalyzes the hydrolysis of S-D-lactoyl-glutathione to form glutathione and D-lactic acid. The chain is Hydroxyacylglutathione hydrolase from Brucella melitensis biotype 1 (strain ATCC 23456 / CCUG 17765 / NCTC 10094 / 16M).